The following is a 333-amino-acid chain: Biotin synthase (333 aa).

In terms of domain architecture, Radical SAM core spans 47–273 (YYGNKVKLNM…MNPTKEIRIA (227 aa)). The [4Fe-4S] cluster site is built by C65, C69, and C72. The [2Fe-2S] cluster site is built by C109, C141, C201, and R271.

Belongs to the radical SAM superfamily. Biotin synthase family. As to quaternary structure, homodimer. [4Fe-4S] cluster serves as cofactor. [2Fe-2S] cluster is required as a cofactor.

It catalyses the reaction (4R,5S)-dethiobiotin + (sulfur carrier)-SH + 2 reduced [2Fe-2S]-[ferredoxin] + 2 S-adenosyl-L-methionine = (sulfur carrier)-H + biotin + 2 5'-deoxyadenosine + 2 L-methionine + 2 oxidized [2Fe-2S]-[ferredoxin]. The protein operates within cofactor biosynthesis; biotin biosynthesis; biotin from 7,8-diaminononanoate: step 2/2. Its function is as follows. Catalyzes the conversion of dethiobiotin (DTB) to biotin by the insertion of a sulfur atom into dethiobiotin via a radical-based mechanism. The polypeptide is Biotin synthase (Geobacillus kaustophilus (strain HTA426)).